A 207-amino-acid polypeptide reads, in one-letter code: Ribonuclease HII (207 aa).

An RNase H type-2 domain is found at 1-207; the sequence is MDVLGIDEAG…ATVEKMKNSQ (207 aa). A divalent metal cation is bound by residues Asp7, Glu8, and Asp105.

It belongs to the RNase HII family. Mn(2+) is required as a cofactor. Mg(2+) serves as cofactor.

The protein localises to the cytoplasm. It catalyses the reaction Endonucleolytic cleavage to 5'-phosphomonoester.. In terms of biological role, endonuclease that specifically degrades the RNA of RNA-DNA hybrids. The sequence is that of Ribonuclease HII from Methanobrevibacter smithii (strain ATCC 35061 / DSM 861 / OCM 144 / PS).